A 250-amino-acid polypeptide reads, in one-letter code: Pre-protein VI (250 aa).

A propeptide spanning residues 1–33 (MEDINFASLAPRHGSRPFMGNWQDIGTSNMSGG) is cleaved from the precursor. The tract at residues 34–54 (AFSWGSLWSGIKNFGSTIKNY) is amphipathic alpha-helix essential for membrane lytic activity. Residues 36–53 (SWGSLWSGIKNFGSTIKN) are involved in endosomal membrane lysis. Positions 48–74 (GSTIKNYGSKAWNSSTGQMLRDKLKEQ) are interaction with hexon protein. Residues 67–76 (LRDKLKEQNF) carry the Nuclear export signal motif. A disordered region spans residues 103-147 (INSKLDPRPPVEEPPPAVETVSPEGRGEKRPRPDREETLVTQIDE). Phosphoserine; by host is present on Ser124. The span at 127–140 (GRGEKRPRPDREET) shows a compositional bias: basic and acidic residues. The Nuclear localization signal signature appears at 131-135 (KRPRP). At Thr143 the chain carries Phosphothreonine; by host. Residues 148 to 151 (PPSY) carry the PPXY motif motif. Residues 206-220 (PSRASLRRAASGPRS) are compositionally biased toward low complexity. Residues 206–226 (PSRASLRRAASGPRSMRPVAS) are disordered. A Nuclear export signal motif is present at residues 231–242 (STLNSIVGLGVQ). The interval 233-239 (LNSIVGL) is interaction with hexon protein. Positions 240–250 (GVQSLKRRRCF) are binds to importin alpha/beta, involved in hexon nuclear import. The Nuclear localization signal signature appears at 245-248 (KRRR).

It belongs to the adenoviridae protein VI family. In terms of assembly, interacts with hexon protein; this interaction allows nuclear import of hexon trimers and possibly pre-capsid assembly. Interacts (via C-terminal NLS) with importin alpha/beta. As to quaternary structure, interacts (via PPxY motif) with host NEDD4 ubiquitine ligase; this interaction might play a role in virus intracellular transport during entry. Part of a complex composed of the core-capsid bridging protein, the endosome lysis protein VI and the hexon-linking protein VIII; these interactions bridge the virus core to the capsid. Interacts with peripentonal hexons; this interaction stabilizes the capsid by gluing two peripentonal hexons together and joining them with an adjacent group-of-nine hexon. Heterodimer with the viral protease; disulfide-linked. Interacts with the viral protease. Ubiquitinated by Nedd4 following partial capsid disassembly; which might play a role in intracellular virus movement during entry. In terms of processing, contains the major nuclear import and export signals. Proteolytically removed during virion maturation. The processing of the C-terminus turns the precursor into a mature viral structural protein and abrogates its ability to promote hexon import and act as a potential chaperone protein.

It localises to the host nucleus. The protein localises to the host cytoplasm. It is found in the virion. Its function is as follows. During virus assembly, promotes hexon trimers nuclear import through nuclear pore complexes via an importin alpha/beta-dependent mechanism. By analogy to herpesviruses capsid assembly, might act as a chaperone to promote the formation of the icosahedral capsid. Structural component of the virion that provides increased stability to the particle shell through its interaction with the core-capsid bridging protein and the hexon-linking protein VIII. Fibers shedding during virus entry into host cell allows the endosome lysis protein to be exposed as a membrane-lytic peptide. Exhibits pH-independent membrane fragmentation activity and probably mediates viral rapid escape from host endosome via organellar membrane lysis. It is not clear if it then remains partially associated with the capsid and involved in the intracellular microtubule-dependent transport of capsid to the nucleus, or if it is lost during endosomal penetration. Functionally, cofactor that activates the viral protease. Binds to viral protease in a 1:1 ratio. This chain is Pre-protein VI, found in Human adenovirus C serotype 2 (HAdV-2).